Here is a 308-residue protein sequence, read N- to C-terminus: GTP-binding protein RAD (308 aa).

Positions 1 to 16 (MTLNGGGSGAGGSRGG) are enriched in gly residues. The segment at 1–88 (MTLNGGGSGA…SLSSGGSDSD (88 aa)) is disordered. Arginine 24 carries the omega-N-methylarginine modification. Position 26 is a phosphoserine (serine 26). The segment covering 48–68 (QAALTPGALTAAAAGTGTQGP) has biased composition (low complexity). GTP is bound by residues 98–105 (GAPGVGKS) and 203–206 (NKSD). A calmodulin-binding region spans residues 278-297 (AKRFLGRIVARNSRKMAFRA).

Belongs to the small GTPase superfamily. RGK family. In terms of assembly, interacts with calmodulin preferentially in the inactive, GDP-bound form. Binds CAMKII which is capable of phosphorylating RAD in vitro. Interacts with CAMK2D. Interacts with CACNB2; interaction may be involved in beta-adrenergic regulation of heart rate and contractile force. Interaction with CACNB2 regulates the trafficking of CACNA1C to the cell membrane. Most abundantly expressed in the heart. Also found in the skeletal muscle and lung. Lesser amounts in placenta and kidney. Also detected in adipose tissue. Overexpressed in muscle of type II diabetic humans.

Its subcellular location is the cell membrane. Functionally, may regulate basal voltage-dependent L-type Ca(2+) currents and be required for beta-adrenergic augmentation of Ca(2+) influx in cardiomyocytes, thereby regulating increases in heart rate and contractile force. May play an important role in cardiac antiarrhythmia via the strong suppression of voltage-gated L-type Ca(2+) currents. Regulates voltage-dependent L-type calcium channel subunit alpha-1C trafficking to the cell membrane. Inhibits cardiac hypertrophy through the calmodulin-dependent kinase II (CaMKII) pathway. Inhibits phosphorylation and activation of CAMK2D. The sequence is that of GTP-binding protein RAD (RRAD) from Homo sapiens (Human).